The primary structure comprises 679 residues: MTKDLLVELGLEELPAYVVTPSEKQLVQRMADFLKDNRLSYDAIEGFSTPRRLAVRVLGLADQQTDLTEDFKGPSKKIALDADGQFSKAAQGFVRGKGLTVDDIEFREVKGEEYVYVTKHEAGKQAKGVLAAVPEVLASLTFPVSMHWANNSFDYIRPVHSLIVLLDDEPLELDFLDIHSGRISRGHRFLGEETSITSADSYEADLRSQFVIASAKERQEMIIAQIRAIEAEQKVQVDIDEDLLNEVLNLVEYPTAFMGSFDPKYLEIPEEVLVTSMKNHQRYFVVRDQAGKLMPNFISVRNGNAKHLQNVIKGNEKVLVARLEDGEFFWREDQKLFIEDLVAKLAHVTFHEKIGSLAEHMDRTKVIAAFLADQAGLSEAEKSAVARAAQIYKFDLLTGMVGEFDELQGIMGEKYALLAGEAAAVATAIREHYLPDSAEGELPETKVGAVLALADKLDTLLSFFSVGLIPSGSNDPYALRRATQGIVRILEHFGWSIPMDKLIDSLYELSFESLTYQHKAEVLDFICARVDKMMGSAIPKDIREAVLASSSFVVPELLARAEALAAASQLDTYKPAVESLSRVFNLAKKAVDAVLIDASLFENDYERALAQAVDSLVLSGSAKEQLAQVFALSPVIDDFFDHTMVMTEDEAIRCNRLALLAELVKKVETIAAFDRLNTK.

The protein belongs to the class-II aminoacyl-tRNA synthetase family. As to quaternary structure, tetramer of two alpha and two beta subunits.

It localises to the cytoplasm. It carries out the reaction tRNA(Gly) + glycine + ATP = glycyl-tRNA(Gly) + AMP + diphosphate. The polypeptide is Glycine--tRNA ligase beta subunit (Streptococcus equi subsp. zooepidemicus (strain H70)).